We begin with the raw amino-acid sequence, 831 residues long: V-type proton ATPase subunit a (831 aa).

Residues 1–418 (MSPSLFRSEE…DSYGIATYRE (418 aa)) lie on the Cytoplasmic side of the membrane. The helical transmembrane segment at 419 to 437 (VNHGIVAIVTFPFLFAIMF) threads the bilayer. At 438–439 (GD) the chain is on the vacuolar side. The chain crosses the membrane as a helical span at residues 440–456 (LGHGAIMASVALMFVLY). The Cytoplasmic portion of the chain corresponds to 457-471 (EKTLGAKKDLDEIVG). The helical transmembrane segment at 472 to 501 (MVFYGRYIVLLMGLFSMYVGFVYNDLFSKP) threads the bilayer. The Vacuolar portion of the chain corresponds to 502–548 (MSIFSSRWVWPVKSEEAIARAVQVGTYPIGIDPTWHSADNNLLFMNS). A helical transmembrane segment spans residues 549-568 (YKMKLSIILGVIHMTFCLFL). At 569–586 (SLSNYRFFKRKLDIYAVF) the chain is on the cytoplasmic side. A helical membrane pass occupies residues 587 to 607 (VPSLIFLEAIFGYLVITIVYK). The Vacuolar portion of the chain corresponds to 608–650 (WCIDWKAKDLQPPSLLNMLILMFLSPGTLEDQLYPGQKYLQVG). A helical membrane pass occupies residues 651–670 (LVIAALICVPWLLIVKPFVL). Topologically, residues 671–723 (WRRHSNEENKYQSLNSDLPNVDEADALMAVDSQEKQAEPFELGEVVIHQVIHT) are cytoplasmic. A helical transmembrane segment spans residues 724–748 (IEFCLGCVSHTASYLRLWALSLAHN). Residues 749 to 769 (QLSSVLWNMTLANGFRMTGIV) are Vacuolar-facing. A helical transmembrane segment spans residues 770 to 808 (GSIFVVILFGFWFIATCVVLVAMEGTSAMLHSLRLHWVE). Residues 809-831 (GMSKHFEGEGYAFTPFTFKVTAE) lie on the Cytoplasmic side of the membrane.

Belongs to the V-ATPase 116 kDa subunit family. V-ATPase is a heteromultimeric enzyme composed of a peripheral catalytic V1 complex (components A to H) attached to an integral membrane V0 proton pore complex (components: a, c, c', c'', d, e, f and VOA1).

It localises to the vacuole membrane. In terms of biological role, subunit of the V0 complex of vacuolar(H+)-ATPase (V-ATPase), a multisubunit enzyme composed of a peripheral complex (V1) that hydrolyzes ATP and a membrane integral complex (V0) that translocates protons. V-ATPase is responsible for acidifying and maintaining the pH of intracellular compartments. The sequence is that of V-type proton ATPase subunit a (vph1) from Schizosaccharomyces pombe (strain 972 / ATCC 24843) (Fission yeast).